The following is a 106-amino-acid chain: Probable glutaredoxin (106 aa).

Residues 8 to 106 (IVQKITGADP…AKYLDVQFTQ (99 aa)) form the Glutaredoxin domain. An intrachain disulfide couples Cys-28 to Cys-31.

Belongs to the glutaredoxin family.

It is found in the virion. The polypeptide is Probable glutaredoxin (Acanthamoeba polyphaga mimivirus (APMV)).